The primary structure comprises 615 residues: uncharacterized protein (615 aa).

The protein belongs to the NodU/CmcH family.

This is an uncharacterized protein from Synechocystis sp. (strain ATCC 27184 / PCC 6803 / Kazusa).